Consider the following 921-residue polypeptide: MAGHPEENAQLLSTEQESMSRNSSDSVASTASTTSLVFDRIGERVAANGSEKPTMVTPKFPPRGERAYADDEHTQIHLEEEEEKDYDMEDGAFLTNGATNKSVDKKLRRLIWIIGGVFIGAWVLALFIFLGKQAYKHSSESPHDPQATSSRGSGKKVTMDQVMGGQWRATKHSISWIEGANGEDGLLLEQGSVGKDYLIVEDVRTQSPSAVGTLDTMTLMKNGYFEVAGRSLTPSKVYPSKDLKKVLVATDVQSNWRHSFYAKYWIFDVETQTAEPLDPVDLDGRVQLASWSPKSDAIVFTRDNNMYLRKLASPTVVQITVDGGPEFFYGVPDWVYEEEVFAGASATWWDDSGKYIAFLRTNESEVPEYPVQYFVSRPSGKDPLPGEENYPEVREIKYPKAGAPNPTVDLLFYDISKAEVFEVKIAGGFEPKDLLITEVVWAGSTGKALIRETNRESDVLRVVLVDVVAREGKTVRFTDIAKLDGGWFEVSEDTRYIPADPANGRPHDGYIDTIIHENYDHLGYFTPMDNSEPILLTSGDWEVVKAPSAVDLKNNIVYFISTKESPITRQLYSVKLDGTDLKAITDTSTEGYYGASFSKGAGYVLLNYNGPNIPWQKVISTPSNDNQYTHIIEENKGLADMAKKHELPILIYQTVTVDGFELQVVERRPPHFNPKKKYPVLFYLYGGPGSQTVSKSFGVDFQSYIASNLGYIVVTVDGRGTGFIGRKARTIIRGNIGHYEARDQIETAKIWASKKYVDESRMAIWGWSYGGFMTLKTLEQDAGETFSYGMAVAPVTDWRFYDSIYTERYMHTPQHNPGGYDNTSISDVKSLAKNVRFLVMHGVADDNVHMQNTLTLLDKLDLAGVENYDVHVFPDSDHSIYFHNANRIVYDKLNNWLINAFNGEWLRTANAVPLEIDAAKV.

Disordered stretches follow at residues 1-33 (MAGH…TAST) and 45-66 (VAAN…RGER). Residues 1–109 (MAGHPEENAQ…NKSVDKKLRR (109 aa)) lie on the Cytoplasmic side of the membrane. Over residues 10–22 (QLLSTEQESMSRN) the composition is skewed to polar residues. Residues 23-33 (SSDSVASTAST) are compositionally biased toward low complexity. Residues 110 to 130 (LIWIIGGVFIGAWVLALFIFL) traverse the membrane as a helical; Signal-anchor for type II membrane protein segment. Topologically, residues 131–921 (GKQAYKHSSE…VPLEIDAAKV (791 aa)) are vacuolar. The tract at residues 138–157 (SSESPHDPQATSSRGSGKKV) is disordered. N362 is a glycosylation site (N-linked (GlcNAc...) asparagine). S768 functions as the Charge relay system in the catalytic mechanism. N822 is a glycosylation site (N-linked (GlcNAc...) asparagine). Catalysis depends on charge relay system residues D845 and H878.

The protein belongs to the peptidase S9B family.

It is found in the vacuole membrane. The catalysed reaction is Release of an N-terminal dipeptide, Xaa-Yaa-|-Zaa-, from a polypeptide, preferentially when Yaa is Pro, provided Zaa is neither Pro nor hydroxyproline.. Its function is as follows. Type IV dipeptidyl-peptidase which removes N-terminal dipeptides sequentially from polypeptides having unsubstituted N-termini provided that the penultimate residue is proline. In Botryotinia fuckeliana (strain B05.10) (Noble rot fungus), this protein is Probable dipeptidyl-aminopeptidase B (dapB).